The chain runs to 634 residues: MSISDEEAEISESEIEDYSETPYRLLRDGTYKVKVNGQLRCPFCAGKKKQDYKYKELYAHATGVSKGSATRSALQKANHLALAMFLENELAGYAEPVPRPPVVPPQLDETEPNPHNVYVWPWMGIVVNPLKEADDKELLLDSAYWLQTLSKFKPIEVNAFWVEQDSIVGVIAKFNGDWSGFAGATELEKEFETQGSSKKEWTERSGDSESKAYGWCARADDFESQGPIGEYLSKEGQLRTVSDISQKNVQDRNTVLEELSDMIAMTNEDLNKVQYSYNRTAMSLQRVLDEKKNLHQAFADETKKMQQMSLRHIQKILYDKEKLSNELDRKMRDLESRAKQLEKHEALTELDRQKLDEDKRKSDAMNKSLQLASREQKKADESVLRLVEEHQRQKEDALNKILLLEKQLDTKQTLEMEIQELKGKLQVMKHLGDDDDEAVQKKMKEMNDELDDKKAELEGLESMNSVLMTKERQSNDEIQAARKKLIAGLTGLLGAETDIGVKRMGELDEKPFLDVCKLRYSANEAAVEAATLCSTWQENLKNPSWQPFKHEGTGDGAEEVVDEDDEQLKKLKREWGKEVHNAVKTALVEMNEYNASGRYTTPELWNFKEGRKATLKEVITFISNDIKILKRKRT.

Residues 288-469 adopt a coiled-coil conformation; sequence LDEKKNLHQA…LESMNSVLMT (182 aa). Over residues 349-364 the composition is skewed to basic and acidic residues; sequence ELDRQKLDEDKRKSDA. Positions 349–375 are disordered; that stretch reads ELDRQKLDEDKRKSDAMNKSLQLASRE.

As to quaternary structure, homodimer. Interacts with IDN2 and AGO4. Forms a complex with IDN2 and FMD2/INDL2. In terms of tissue distribution, highly expressed in flowers and at lower levels in roots, leaves and stems.

Functionally, forms a complex with IDN2 and FDM2/IDNL2 that is required for RNA-directed DNA methylation (RdDM) and that functions at a downstream step of the RdDM pathway. Required for de novo DNA methylation and 24 nucleotide small interfering RNA (siRNA) accumulation. Binds unmethylated but not methylated DNAs through its coiled-coil domain. May bind double-stranded RNAs (dsRNAs) with 5'-overhangs through its XS domain. However, according to, FMD1 does not bind dsRNAs. The polypeptide is Factor of DNA methylation 1 (Arabidopsis thaliana (Mouse-ear cress)).